Reading from the N-terminus, the 75-residue chain is UPF0346 protein OB1736 (75 aa).

This sequence belongs to the UPF0346 family.

This chain is UPF0346 protein OB1736, found in Oceanobacillus iheyensis (strain DSM 14371 / CIP 107618 / JCM 11309 / KCTC 3954 / HTE831).